The primary structure comprises 1220 residues: Plasma membrane calcium-transporting ATPase 1 (1220 aa).

Gly2 bears the N-acetylglycine mark. Residues 2–105 are Cytoplasmic-facing; that stretch reads GDMANNSVAY…KTFLQLVWEA (104 aa). Phosphoserine is present on residues Ser8 and Ser17. A helical membrane pass occupies residues 106 to 126; the sequence is LQDVTLIILEIAAIVSLGLSF. Residues 127–154 lie on the Extracellular side of the membrane; it reads YQPPEGDNALCGEVSVGEEEGEGETGWI. The helical transmembrane segment at 155–175 threads the bilayer; sequence EGAAILLSVVCVVLVTAFNDW. Residues 176 to 366 lie on the Cytoplasmic side of the membrane; the sequence is SKEKQFRGLQ…KEKSVLQGKL (191 aa). The disordered stretch occupies residues 297–356; it reads EEEKKDEKKKEKKNKKQDGAIENRNKAKAQDGAAMEMQPLKSEEGGDGDEKDKKKANLPK. Composition is skewed to basic and acidic residues over residues 312–325 and 337–356; these read KQDG…KAKA and KSEE…NLPK. Residue Ser338 is modified to Phosphoserine. Residues 367-386 traverse the membrane as a helical segment; sequence TKLAVQIGKAGLLMSAITVI. Residues 387–418 lie on the Extracellular side of the membrane; that stretch reads ILVLYFVIDTFWVQKRPWLAECTPIYIQYFVK. Residues 419 to 439 form a helical membrane-spanning segment; it reads FFIIGVTVLVVAVPEGLPLAV. Residues 440 to 855 lie on the Cytoplasmic side of the membrane; sequence TISLAYSVKK…RNVYDSISKF (416 aa). The active-site 4-aspartylphosphate intermediate is Asp475. Residues Asp475, Thr477, and Asp797 each contribute to the Mg(2+) site. The helical transmembrane segment at 856-876 threads the bilayer; it reads LQFQLTVNVVAVIVAFTGACI. Residues 877–882 are Extracellular-facing; the sequence is TQDSPL. Residues 883–903 form a helical membrane-spanning segment; the sequence is KAVQMLWVNLIMDTLASLALA. Topologically, residues 904-927 are cytoplasmic; the sequence is TEPPTESLLLRKPYGRNKPLISRT. The chain crosses the membrane as a helical span at residues 928–948; that stretch reads MMKNILGHAFYQLVVVFTLLF. Residues 949–971 are Extracellular-facing; that stretch reads AGEKFFDIDSGRNAPLHAPPSEH. A helical membrane pass occupies residues 972-991; sequence YTIVFNTFVLMQLFNEINAR. Residues 992–1005 lie on the Cytoplasmic side of the membrane; it reads KIHGERNVFEGIFN. A helical transmembrane segment spans residues 1006–1027; that stretch reads NAIFCTIVLGTFVVQIIIVQFG. Over 1028-1039 the chain is Extracellular; the sequence is GKPFSCSELSIE. A helical membrane pass occupies residues 1040–1060; the sequence is QWLWSIFLGMGTLLWGQLIST. The Cytoplasmic portion of the chain corresponds to 1061–1220; that stretch reads IPTSRLKFLK…SPLHSLETSL (160 aa). Residues 1100 to 1117 form a calmodulin-binding subdomain A region; it reads LRRGQILWFRGLNRIQTQ. Thr1116 carries the phosphothreonine; by PKC modification. Residues 1118-1220 form a required for basolateral membrane targeting region; that stretch reads IRVVNAFRSS…SPLHSLETSL (103 aa). Residues Ser1140 and Ser1155 each carry the phosphoserine modification. Residues 1162–1220 form a disordered region; that stretch reads IDDTDAEDDAPTKRNSSPPPSPNKNNNAVDSGIHLTIEMNKSATSSSPGSPLHSLETSL. Thr1165 carries the post-translational modification Phosphothreonine. The residue at position 1177 (Ser1177) is a Phosphoserine; by PKA. Residues Ser1178 and Ser1182 each carry the phosphoserine modification. Positions 1200–1220 are enriched in polar residues; the sequence is MNKSATSSSPGSPLHSLETSL.

This sequence belongs to the cation transport ATPase (P-type) (TC 3.A.3) family. Type IIB subfamily. As to quaternary structure, monomer. Dimer. Oligomer. Calmodulin binding. Interacts with PDZD11. Interacts with SLC35G1 and STIM1. Interacts with YWHAE; interacts with the monomeric and dimeric forms of the YWHAE but prefer the monomer form; this interaction inhibits calcium-transporting ATPase activity. Interacts with NPTN; this interaction stabilizes ATP2B1 and increases ATPase activity; this interaction controls T cell calcium homeostasis following T cell activation. Interacts with EPB41; regulates small intestinal calcium absorption through regulation of membrane expression of ATP2B1. In terms of tissue distribution, isoform B is ubiquitously expressed. Isoforms A and E have only been found in brain cortex. Isoform C is found in brain cortex, skeletal muscle and heart muscle. Isoform D has only been found in fetal skeletal muscle. Isoform K has been found in small intestine and liver. Isoform B is expressed in hair cells of inner ear.

The protein resides in the cell membrane. It is found in the basolateral cell membrane. It localises to the synapse. The protein localises to the presynaptic cell membrane. Its subcellular location is the cytoplasmic vesicle. The protein resides in the secretory vesicle. It is found in the synaptic vesicle membrane. The catalysed reaction is Ca(2+)(in) + ATP + H2O = Ca(2+)(out) + ADP + phosphate + H(+). Catalyzes the hydrolysis of ATP coupled with the transport of calcium from the cytoplasm to the extracellular space thereby maintaining intracellular calcium homeostasis. Plays a role in blood pressure regulation through regulation of intracellular calcium concentration and nitric oxide production leading to regulation of vascular smooth muscle cells vasoconstriction. Positively regulates bone mineralization through absorption of calcium from the intestine. Plays dual roles in osteoclast differentiation and survival by regulating RANKL-induced calcium oscillations in preosteoclasts and mediating calcium extrusion in mature osteoclasts. Regulates insulin sensitivity through calcium/calmodulin signaling pathway by regulating AKT1 activation and NOS3 activation in endothelial cells. May play a role in synaptic transmission by modulating calcium and proton dynamics at the synaptic vesicles. The protein is Plasma membrane calcium-transporting ATPase 1 of Rattus norvegicus (Rat).